The sequence spans 152 residues: 6,7-dimethyl-8-ribityllumazine synthase (152 aa).

5-amino-6-(D-ribitylamino)uracil contacts are provided by residues Phe-18, 49 to 51 (ALE), and 75 to 77 (CVI). A (2S)-2-hydroxy-3-oxobutyl phosphate-binding site is contributed by 80–81 (ET). The active-site Proton donor is His-83. Position 108 (Asn-108) interacts with 5-amino-6-(D-ribitylamino)uracil. Position 122 (Arg-122) interacts with (2S)-2-hydroxy-3-oxobutyl phosphate.

This sequence belongs to the DMRL synthase family.

The catalysed reaction is (2S)-2-hydroxy-3-oxobutyl phosphate + 5-amino-6-(D-ribitylamino)uracil = 6,7-dimethyl-8-(1-D-ribityl)lumazine + phosphate + 2 H2O + H(+). It participates in cofactor biosynthesis; riboflavin biosynthesis; riboflavin from 2-hydroxy-3-oxobutyl phosphate and 5-amino-6-(D-ribitylamino)uracil: step 1/2. In terms of biological role, catalyzes the formation of 6,7-dimethyl-8-ribityllumazine by condensation of 5-amino-6-(D-ribitylamino)uracil with 3,4-dihydroxy-2-butanone 4-phosphate. This is the penultimate step in the biosynthesis of riboflavin. The chain is 6,7-dimethyl-8-ribityllumazine synthase from Bartonella bacilliformis (strain ATCC 35685 / KC583 / Herrer 020/F12,63).